A 99-amino-acid chain; its full sequence is MSNTISEKIVLMRKSEYLSRQQLADLTGVPYGTLSYYESGRSTPPTDVMMNILQTPQFTKYTLWFMTNQIAPEFGQIAPALAHFGQNETTSPHSGQKTG.

The HTH cro/C1-type domain maps to 9–63; it reads IVLMRKSEYLSRQQLADLTGVPYGTLSYYESGRSTPPTDVMMNILQTPQFTKYTL. The segment at residues 20–39 is a DNA-binding region (H-T-H motif); that stretch reads RQQLADLTGVPYGTLSYYES.

This chain is Repressor protein C (C), found in Enterobacteriaceae (Bacteriophage P2).